We begin with the raw amino-acid sequence, 155 residues long: Ribosomal RNA large subunit methyltransferase H (155 aa).

Residues G104 and 123–128 (LSAMTF) each bind S-adenosyl-L-methionine.

This sequence belongs to the RNA methyltransferase RlmH family. As to quaternary structure, homodimer.

It is found in the cytoplasm. The enzyme catalyses pseudouridine(1915) in 23S rRNA + S-adenosyl-L-methionine = N(3)-methylpseudouridine(1915) in 23S rRNA + S-adenosyl-L-homocysteine + H(+). In terms of biological role, specifically methylates the pseudouridine at position 1915 (m3Psi1915) in 23S rRNA. The protein is Ribosomal RNA large subunit methyltransferase H of Oleidesulfovibrio alaskensis (strain ATCC BAA-1058 / DSM 17464 / G20) (Desulfovibrio alaskensis).